The sequence spans 1418 residues: ABC transporter G family member 38 (1418 aa).

Residues 1–27 are disordered; sequence MAHYRVSSEVENIMNRDRSHRKNEEED. Residues 147-419 form the ABC transporter 1 domain; that stretch reads TKIRVLPDRK…FEFMGFKCPE (273 aa). ATP is bound at residue 179–186; the sequence is GPPGSGKS. Positions 497–710 constitute an ABC transmembrane type-2 1 domain; sequence ELLKACLERE…IQTAVSVNEF (214 aa). 6 helical membrane passes run 516 to 536, 548 to 568, 600 to 620, 634 to 654, 659 to 679, and 729 to 749; these read TFVL…VVFW, GIIY…SGFF, IITF…TYFT, YLVL…IAAV, VVSN…SGYV, and FFVE…STIL. Positions 821–1073 constitute an ABC transporter 2 domain; the sequence is MTFENITYSV…QLIEYFEGIR (253 aa). Residue 866 to 873 coordinates ATP; sequence GVSGAGKT. The ABC transmembrane type-2 2 domain occupies 1146-1360; that stretch reads SQFQACLWKQ…GLYGLTIAQY (215 aa). 7 helical membrane passes run 1167–1187, 1197–1217, 1249–1269, 1284–1304, 1310–1330, 1341–1361, and 1387–1407; these read AVRF…FWSL, IFNS…QSAA, VIIE…IVYG, IFFT…VISV, IASI…GFTI, WFTY…AQYG, and FLWV…FIYA.

Belongs to the ABC transporter superfamily. ABCG family. PDR (TC 3.A.1.205) subfamily. In terms of tissue distribution, expressed in roots and siliques at low levels.

The protein localises to the membrane. Its function is as follows. May be a general defense protein. The chain is ABC transporter G family member 38 (ABCG38) from Arabidopsis thaliana (Mouse-ear cress).